Consider the following 404-residue polypeptide: LL-diaminopimelate aminotransferase (404 aa).

Substrate-binding residues include Tyr-15 and Gly-42. Residues Tyr-72, 108–109 (AK), Tyr-132, Asn-188, Tyr-219, and 247–249 (SFS) each bind pyridoxal 5'-phosphate. Substrate-binding residues include Lys-109, Tyr-132, and Asn-188. Lys-250 is subject to N6-(pyridoxal phosphate)lysine. Arg-258 and Asn-288 together coordinate pyridoxal 5'-phosphate. Residues Asn-288 and Arg-384 each contribute to the substrate site.

It belongs to the class-I pyridoxal-phosphate-dependent aminotransferase family. LL-diaminopimelate aminotransferase subfamily. In terms of assembly, homodimer. Requires pyridoxal 5'-phosphate as cofactor.

The enzyme catalyses (2S,6S)-2,6-diaminopimelate + 2-oxoglutarate = (S)-2,3,4,5-tetrahydrodipicolinate + L-glutamate + H2O + H(+). It participates in amino-acid biosynthesis; L-lysine biosynthesis via DAP pathway; LL-2,6-diaminopimelate from (S)-tetrahydrodipicolinate (aminotransferase route): step 1/1. Involved in the synthesis of meso-diaminopimelate (m-DAP or DL-DAP), required for both lysine and peptidoglycan biosynthesis. Catalyzes the direct conversion of tetrahydrodipicolinate to LL-diaminopimelate. The protein is LL-diaminopimelate aminotransferase of Agathobacter rectalis (strain ATCC 33656 / DSM 3377 / JCM 17463 / KCTC 5835 / VPI 0990) (Eubacterium rectale).